The following is a 526-amino-acid chain: Efflux pump aunC (526 aa).

14 helical membrane-spanning segments follow: residues 23 to 43 (LCYK…CTSL), 64 to 84 (DVGW…LPFG), 89 to 109 (FFPI…GSFI), 125 to 145 (VAGL…TQCV), 155 to 175 (GFIM…GGAF), 183 to 203 (WCFY…FFTF), 218 to 238 (AAGL…CLLL), 254 to 274 (IIAL…LQLW), 296 to 316 (LYGF…PIWF), 339 to 359 (VIFA…GPFM), 360 to 380 (LLSA…HPSS), 386 to 406 (IGYQ…PVFV), 418 to 438 (TATA…VSVA), and 491 to 511 (VHTF…ATVI).

The protein belongs to the major facilitator superfamily. TCR/Tet family.

The protein localises to the cell membrane. Its function is as follows. Efflux pump; part of the gene cluster that mediates the biosynthesis of aurasperone B, a dimeric gamma-naphthopyrone. The protein is Efflux pump aunC of Aspergillus niger (strain ATCC 1015 / CBS 113.46 / FGSC A1144 / LSHB Ac4 / NCTC 3858a / NRRL 328 / USDA 3528.7).